Here is a 375-residue protein sequence, read N- to C-terminus: Myb family transcription factor PHL5 (375 aa).

Residues 159 to 171 are compositionally biased toward polar residues; the sequence is TSSQHQPKQSHPR. Positions 159–178 are disordered; sequence TSSQHQPKQSHPRFSSPPSF. The 61-residue stretch at 189 to 249 folds into the HTH myb-type domain; sequence CVNKTRIRWT…HLQKYRIAKY (61 aa). The H-T-H motif DNA-binding region spans 220–245; sequence PKAILKRMDSDGLTIFHVKSHLQKYR. Positions 279–299 form a coiled coil; sequence KEALQLQLDVQRHLHEQLEIQ. The short motif at 292-297 is the LHEQLE element; it reads LHEQLE.

This sequence belongs to the MYB-CC family.

The protein resides in the nucleus. The sequence is that of Myb family transcription factor PHL5 from Arabidopsis thaliana (Mouse-ear cress).